A 212-amino-acid chain; its full sequence is Prolactin (212 aa).

Positions 1 to 24 (MAHRETNGSKLFITVLCMVAACSA) are cleaved as a signal peptide. 2 disulfide bridges follow: cysteine 70–cysteine 185 and cysteine 202–cysteine 212.

Belongs to the somatotropin/prolactin family.

The protein localises to the secreted. The protein is Prolactin (prl) of Sparus aurata (Gilthead sea bream).